A 377-amino-acid chain; its full sequence is uncharacterized protein (377 aa).

Positions 1–46 (MLAGLRRRGSMTTPPGPEIPPPHQGGFYSAGHHPQRPWPETPPPKT) are disordered. 2 stretches are compositionally biased toward pro residues: residues 14-23 (PPGPEIPPPH) and 36-45 (RPWPETPPPK). Residues 53 to 73 (MLGAVALLAVVGVTVAVTLAV) form a helical membrane-spanning segment. A disordered region spans residues 77 to 107 (DKRDAIPPGSGVSGSPTASDIASADDSGPVS).

It is found in the cell inner membrane. May be involved in the ESX-1 / type VII specialized secretion system (T7SS), which exports several proteins including EsxA and EsxB. Involved in DNA conjugation in the recipient strain. This is an uncharacterized protein from Mycolicibacterium smegmatis (strain MKD8) (Mycobacterium smegmatis).